Here is a 355-residue protein sequence, read N- to C-terminus: Hyaluronan and proteoglycan link protein 1 (355 aa).

The propeptide occupies M1–L9. N-linked (GlcNAc...) asparagine glycosylation is found at N21 and N56. Residues P38–N156 form the Ig-like V-type domain. 5 disulfides stabilise this stretch: C61/C140, C182/C253, C206/C227, C280/C350, and C305/C326. Link domains are found at residues V160–T255 and G260–R352.

It belongs to the HAPLN family.

Its subcellular location is the secreted. It is found in the extracellular space. It localises to the extracellular matrix. In terms of biological role, stabilizes the aggregates of proteoglycan monomers with hyaluronic acid in the extracellular cartilage matrix. The polypeptide is Hyaluronan and proteoglycan link protein 1 (HAPLN1) (Gallus gallus (Chicken)).